The primary structure comprises 312 residues: Structure-specific endonuclease subunit SLX1 (312 aa).

The 84-residue stretch at 9–92 (DFYGCYLLQS…QHGYQTRYIK (84 aa)) folds into the GIY-YIG domain. The segment at 219–282 (CQFCNKIIKH…IPQSPKCPKC (64 aa)) adopts an SLX1-type zinc-finger fold.

The protein belongs to the SLX1 family. As to quaternary structure, forms a heterodimer with SLX4. Requires a divalent metal cation as cofactor.

The protein localises to the nucleus. Catalytic subunit of the SLX1-SLX4 structure-specific endonuclease that resolves DNA secondary structures generated during DNA repair and recombination. Has endonuclease activity towards branched DNA substrates, introducing single-strand cuts in duplex DNA close to junctions with ss-DNA. The chain is Structure-specific endonuclease subunit SLX1 from Candida glabrata (strain ATCC 2001 / BCRC 20586 / JCM 3761 / NBRC 0622 / NRRL Y-65 / CBS 138) (Yeast).